Consider the following 382-residue polypeptide: Dual-specificity RNA methyltransferase RlmN (382 aa).

Glu-95 (proton acceptor) is an active-site residue. The Radical SAM core domain occupies 101 to 348 (EDDRGTLCIS…TTVRKTRGDD (248 aa)). Cys-108 and Cys-353 are disulfide-bonded. Cys-115, Cys-119, and Cys-122 together coordinate [4Fe-4S] cluster. Residues 179-180 (GE), Ser-211, 233-235 (SLH), and Asn-310 each bind S-adenosyl-L-methionine. The active-site S-methylcysteine intermediate is the Cys-353.

It belongs to the radical SAM superfamily. RlmN family. [4Fe-4S] cluster serves as cofactor.

The protein resides in the cytoplasm. The catalysed reaction is adenosine(2503) in 23S rRNA + 2 reduced [2Fe-2S]-[ferredoxin] + 2 S-adenosyl-L-methionine = 2-methyladenosine(2503) in 23S rRNA + 5'-deoxyadenosine + L-methionine + 2 oxidized [2Fe-2S]-[ferredoxin] + S-adenosyl-L-homocysteine. It catalyses the reaction adenosine(37) in tRNA + 2 reduced [2Fe-2S]-[ferredoxin] + 2 S-adenosyl-L-methionine = 2-methyladenosine(37) in tRNA + 5'-deoxyadenosine + L-methionine + 2 oxidized [2Fe-2S]-[ferredoxin] + S-adenosyl-L-homocysteine. In terms of biological role, specifically methylates position 2 of adenine 2503 in 23S rRNA and position 2 of adenine 37 in tRNAs. m2A2503 modification seems to play a crucial role in the proofreading step occurring at the peptidyl transferase center and thus would serve to optimize ribosomal fidelity. This chain is Dual-specificity RNA methyltransferase RlmN, found in Bordetella pertussis (strain Tohama I / ATCC BAA-589 / NCTC 13251).